A 306-amino-acid chain; its full sequence is uncharacterized protein (306 aa).

The segment at 40 to 156 (HETCSTPGED…AVASASAPTE (117 aa)) is disordered. Over residues 64–73 (EGINLGEEGL) the composition is skewed to low complexity. Basic residues predominate over residues 129–139 (KQHKKAKKRKS).

This is an uncharacterized protein from Rattus norvegicus (Rat).